The primary structure comprises 378 residues: Ribosomal RNA large subunit methyltransferase G (378 aa).

This sequence belongs to the methyltransferase superfamily. RlmG family.

The protein resides in the cytoplasm. It carries out the reaction guanosine(1835) in 23S rRNA + S-adenosyl-L-methionine = N(2)-methylguanosine(1835) in 23S rRNA + S-adenosyl-L-homocysteine + H(+). In terms of biological role, specifically methylates the guanine in position 1835 (m2G1835) of 23S rRNA. The chain is Ribosomal RNA large subunit methyltransferase G from Escherichia coli O1:K1 / APEC.